The sequence spans 670 residues: Extracellular matrix protein 2 (670 aa).

The N-terminal stretch at 1–19 (MKLAVLFCFILLIVLQTDC) is a signal peptide. The VWFC domain maps to 96–153 (GYCFVKGMIMYNKAVWSPEPCTTCLCSNGRVLCDETECHPKACPYTIKPEGECCPICS). The tract at residues 185-270 (SEEDEEIAEG…EEDAIRGDVF (86 aa)) is disordered. Residues 192–227 (AEGHKEHKKETSVPTKIHGDGERTERKLRPEKEGRS) are compositionally biased toward basic and acidic residues. A compositionally biased stretch (acidic residues) spans 241 to 263 (ESKEETEREGEEEEEEEEEEEED). The short motif at 266-268 (RGD) is the Cell attachment site element. The LRRNT domain occupies 278-315 (PGTPRGRPRLPRSCSLSYRTISCVHADFTEIPPITAPE). LRR repeat units follow at residues 339 to 359 (NLERLDLSRNNITSSGIGPKA), 365 to 386 (KLMRLNMDGNNLVHIPSDLPST), 387 to 407 (LEELKINDNNLQAIDEKSLSD), 410 to 430 (QLVTLELEGNNLSEINVDPLA), 436 to 456 (SLSYLRLGRNKFRIIPQGLPA), 457 to 478 (STEELYLENNQIEEITEICFNH), 481 to 501 (KITMIILRYNKIEESRIAPLA), 507 to 528 (NLESIDLSYNKLYHVPSYLPKS), 529 to 549 (LLHLVLIGNQIDRIPGYVFGH), 553 to 573 (GLEYLYLSFNRLSDDGVDLVS), 580 to 601 (SLRELFLDHNDFKSIPPGIQDM), 603 to 624 (ALHFLRLNNNKIRNIHPEQICN), and 632 to 655 (ALEHLHLENNYIRTREISSYAFSC). A glycan (N-linked (GlcNAc...) asparagine) is linked at Asn349. Asn420 carries an N-linked (GlcNAc...) asparagine glycan. N-linked (GlcNAc...) asparagine glycosylation is present at Asn477.

It belongs to the small leucine-rich proteoglycan (SLRP) family. SLRP class I subfamily. As to quaternary structure, interacts with numerous extracellular matrix proteins. Interacts with isoform 1 of MSL1. Interacts with isoform 3 of RASSF1.

It localises to the secreted. Its subcellular location is the extracellular space. The protein localises to the extracellular matrix. Its function is as follows. Promotes matrix assembly and cell adhesiveness. The chain is Extracellular matrix protein 2 (Ecm2) from Mus musculus (Mouse).